Consider the following 335-residue polypeptide: Holliday junction branch migration complex subunit RuvB (335 aa).

A large ATPase domain (RuvB-L) region spans residues Ala-4 to Tyr-184. ATP-binding positions include Ile-23, Arg-24, Gly-65, Lys-68, Thr-69, Thr-70, Glu-131–Tyr-133, Arg-174, Tyr-184, and Arg-221. Residue Thr-69 coordinates Mg(2+). The segment at Ser-185 to Asp-255 is small ATPAse domain (RuvB-S). The tract at residues Asp-258–Asp-335 is head domain (RuvB-H). Positions 294, 313, and 318 each coordinate DNA.

This sequence belongs to the RuvB family. In terms of assembly, homohexamer. Forms an RuvA(8)-RuvB(12)-Holliday junction (HJ) complex. HJ DNA is sandwiched between 2 RuvA tetramers; dsDNA enters through RuvA and exits via RuvB. An RuvB hexamer assembles on each DNA strand where it exits the tetramer. Each RuvB hexamer is contacted by two RuvA subunits (via domain III) on 2 adjacent RuvB subunits; this complex drives branch migration. In the full resolvosome a probable DNA-RuvA(4)-RuvB(12)-RuvC(2) complex forms which resolves the HJ.

The protein localises to the cytoplasm. It catalyses the reaction ATP + H2O = ADP + phosphate + H(+). The RuvA-RuvB-RuvC complex processes Holliday junction (HJ) DNA during genetic recombination and DNA repair, while the RuvA-RuvB complex plays an important role in the rescue of blocked DNA replication forks via replication fork reversal (RFR). RuvA specifically binds to HJ cruciform DNA, conferring on it an open structure. The RuvB hexamer acts as an ATP-dependent pump, pulling dsDNA into and through the RuvAB complex. RuvB forms 2 homohexamers on either side of HJ DNA bound by 1 or 2 RuvA tetramers; 4 subunits per hexamer contact DNA at a time. Coordinated motions by a converter formed by DNA-disengaged RuvB subunits stimulates ATP hydrolysis and nucleotide exchange. Immobilization of the converter enables RuvB to convert the ATP-contained energy into a lever motion, pulling 2 nucleotides of DNA out of the RuvA tetramer per ATP hydrolyzed, thus driving DNA branch migration. The RuvB motors rotate together with the DNA substrate, which together with the progressing nucleotide cycle form the mechanistic basis for DNA recombination by continuous HJ branch migration. Branch migration allows RuvC to scan DNA until it finds its consensus sequence, where it cleaves and resolves cruciform DNA. In Haemophilus influenzae (strain 86-028NP), this protein is Holliday junction branch migration complex subunit RuvB.